Reading from the N-terminus, the 472-residue chain is MSTSQLAKKGEAWSARFSEPMSDLVKRYTASVFFDKRLALFDIQGSLAHAAMLAKQGIIAEADRAEIERGMAQIKAEIEAGGFEWKLDLEDVHLNIEARLTALVGDAGKRLHTGRSRNDQVATDIRLWLRSEIDNIMVLLGALRAALLDLAEQNADTILPGFTHLQVAQPVTFGHHLLAYNEMFTRDAERMADCRKRVNRLPLGAAALAGTSYPIDREFVAQQLGFDGVCRNSLDAVSDRDFAIEFCAAAALVMTHVSRFSEELVLWMSPRVGFIDIADRFCTGSSIMPQKKNPDVPELARGKTGRVNGHLIGLLTLMKGQPLAYNKDNQEDKEPLFDTVDTVVDTLRIFADMVPGITVKPEAMRAAALQGYATATDLADYLVKKGLPFRDAHEAVAHAVRACDSRQCDLADLSVAELREVSGLGDKAALIGDDVHAVLTLEGSVAARDHIGGTAPAQVRAAIAEARKTLNG.

This sequence belongs to the lyase 1 family. Argininosuccinate lyase subfamily.

It localises to the cytoplasm. It carries out the reaction 2-(N(omega)-L-arginino)succinate = fumarate + L-arginine. It functions in the pathway amino-acid biosynthesis; L-arginine biosynthesis; L-arginine from L-ornithine and carbamoyl phosphate: step 3/3. In Cupriavidus necator (strain ATCC 17699 / DSM 428 / KCTC 22496 / NCIMB 10442 / H16 / Stanier 337) (Ralstonia eutropha), this protein is Argininosuccinate lyase.